A 339-amino-acid polypeptide reads, in one-letter code: Uroporphyrinogen decarboxylase (339 aa).

Substrate contacts are provided by residues Arg-21–Arg-25, Asp-71, Tyr-147, Ser-202, and His-315.

Belongs to the uroporphyrinogen decarboxylase family. Homodimer.

The protein resides in the cytoplasm. The enzyme catalyses uroporphyrinogen III + 4 H(+) = coproporphyrinogen III + 4 CO2. It participates in porphyrin-containing compound metabolism; protoporphyrin-IX biosynthesis; coproporphyrinogen-III from 5-aminolevulinate: step 4/4. Functionally, catalyzes the decarboxylation of four acetate groups of uroporphyrinogen-III to yield coproporphyrinogen-III. The sequence is that of Uroporphyrinogen decarboxylase from Helicobacter pylori (strain P12).